A 349-amino-acid chain; its full sequence is Methionine import ATP-binding protein MetN (349 aa).

In terms of domain architecture, ABC transporter spans 5–245 (IDLKNITVQF…PQKQLTRQFV (241 aa)). 37–44 (GFSGAGKS) contributes to the ATP binding site.

The protein belongs to the ABC transporter superfamily. Methionine importer (TC 3.A.1.24) family. In terms of assembly, the complex is composed of two ATP-binding proteins (MetN), two transmembrane proteins (MetI) and a solute-binding protein (MetQ).

Its subcellular location is the cell membrane. The enzyme catalyses L-methionine(out) + ATP + H2O = L-methionine(in) + ADP + phosphate + H(+). The catalysed reaction is D-methionine(out) + ATP + H2O = D-methionine(in) + ADP + phosphate + H(+). Part of the ABC transporter complex MetNIQ involved in methionine import. Responsible for energy coupling to the transport system. This is Methionine import ATP-binding protein MetN from Lactobacillus johnsonii (strain CNCM I-12250 / La1 / NCC 533).